A 300-amino-acid chain; its full sequence is Cell adhesion molecule CEACAM19 (300 aa).

The first 32 residues, 1–32, serve as a signal peptide directing secretion; that stretch reads MEIPMGTQGCFSKSLLLSASILVLWMLQGSQA. Over 33-157 the chain is Extracellular; the sequence is ALYIQKIPEQ…PSTHLPTNAG (125 aa). Residue Asn-104 is glycosylated (N-linked (GlcNAc...) asparagine). Residues 158-178 traverse the membrane as a helical segment; it reads ILAATIIGSLAAGALLISCIA. The Cytoplasmic segment spans residues 179–300; that stretch reads YLLVTRNWRG…APYCQLVPTS (122 aa). The segment at 259–291 is disordered; it reads SINPARPLPTPPHLQAEPENHQYQQDLLNPDPA.

This sequence belongs to the immunoglobulin superfamily. CEA family. As to expression, ubiquitous with highest expression in prostate, uterus, fetal brain, mammary gland, adrenal gland, skeletal muscle, small intestine, and kidney, and lower expression in lung, cerebellum, testis, liver, pancreas, bone marrow and ovary.

It localises to the membrane. The sequence is that of Cell adhesion molecule CEACAM19 from Homo sapiens (Human).